A 606-amino-acid polypeptide reads, in one-letter code: MSRDEKNATLPHIRNFSIIAHIDHGKSTLSDRIIQICGGLTERELKEQVLDSMDLERERGITIKAQSVTLDYKAEDGQVYQLNFIDTPGHVDFSYEVSRSLYACEGALLVVDAGQGVEAQSVANCYTAVEQGLEVLPVLNKMDLPQADPDRVAHEVEEIIGIDASDACRVSAKSGLGMEALLERLVRDVPPPKGDPEAPLQALIVDSWFDNYLGVISLVRLFDGTIKKGDKIRMKSTERAWEVGEVGIFTPKRKETGILRAGEVGFVVAGIKDIHGAPVGDTIVHAKGGEDVARLPGFQKVKPQVYAGMFPVSSDDYEDFRDALEKLALNDASLDYEPENSDALGFGFRVGFLGTLHMEIVQERLEREYNLDLLTTAPTVIYELAMKDGETRYVSNPSKLPDMADIEEMREPVVRASILVPQDFVGNVISECEQRRGTQLDMLFLGSQIQLTYELPMSEVVMDFFDRLKSISRGYASLEYNFERFEAAKLVRLDVLINGDRVDALATIVHRDHAHPRGRALVEKMKELIPRQMFDVAIQATLGGQVVARSTVKALRKNVTAKCYGGDVTRKRKLLEKQKAGKKRMKQVGKVEIPQDAFLAVLKMND.

Positions 11-193 (PHIRNFSIIA…RLVRDVPPPK (183 aa)) constitute a tr-type G domain. Residues 23 to 28 (DHGKST) and 140 to 143 (NKMD) contribute to the GTP site.

This sequence belongs to the TRAFAC class translation factor GTPase superfamily. Classic translation factor GTPase family. LepA subfamily.

It is found in the cell inner membrane. It carries out the reaction GTP + H2O = GDP + phosphate + H(+). Required for accurate and efficient protein synthesis under certain stress conditions. May act as a fidelity factor of the translation reaction, by catalyzing a one-codon backward translocation of tRNAs on improperly translocated ribosomes. Back-translocation proceeds from a post-translocation (POST) complex to a pre-translocation (PRE) complex, thus giving elongation factor G a second chance to translocate the tRNAs correctly. Binds to ribosomes in a GTP-dependent manner. This is Elongation factor 4 from Chromohalobacter salexigens (strain ATCC BAA-138 / DSM 3043 / CIP 106854 / NCIMB 13768 / 1H11).